Reading from the N-terminus, the 426-residue chain is Trophoblast glycoprotein (426 aa).

Positions 1–31 (MPGAGSRGPSAGDGRLRLARLALVLLGWVSA) are cleaved as a signal peptide. Residues 32-361 (SAPSSSLPSS…ATLPQSLQTS (330 aa)) lie on the Extracellular side of the membrane. The span at 34-51 (PSSSLPSSSTSPAAFLAS) shows a compositional bias: low complexity. The interval 34–54 (PSSSLPSSSTSPAAFLASGSA) is disordered. An LRRNT domain is found at 53–91 (SAQPPPAERCPAACECSEAARTVKCVNRNLLEVPADLPP). 2 disulfide bridges follow: Cys62/Cys68 and Cys66/Cys77. 3 LRR repeats span residues 92–113 (YVRN…AFAR), 116–139 (PLAD…GAFE), and 141–163 (LPGL…FTFA). Asn124 carries an N-linked (GlcNAc...) asparagine glycan. Asn166 carries N-linked (GlcNAc...) asparagine glycosylation. 4 LRR repeats span residues 172 to 210 (PSPL…AALR), 215 to 238 (LRGL…LLDQ), 239 to 261 (LPSL…ASFR), and 262 to 281 (NLTH…VLHN). N-linked (GlcNAc...) asparagine glycosylation occurs at Asn281. One can recognise an LRRCT domain in the interval 289-352 (GLAHVRVFLD…LTSSDLDCDA (64 aa)). 2 cysteine pairs are disulfide-bonded: Cys304/Cys329 and Cys306/Cys350. The helical transmembrane segment at 362–382 (YVFLGIVLALIGAIFLLVLYL) threads the bilayer. At 383–426 (NRKGIKKWMHNIRDACRDHMEGYHYRYEINADPRLTNLSSNSDV) the chain is on the cytoplasmic side. Ser424 carries the phosphoserine modification.

Highly glycosylated.

The protein resides in the cell membrane. In terms of biological role, may function as an inhibitor of Wnt/beta-catenin signaling by indirectly interacting with LRP6 and blocking Wnt3a-dependent LRP6 internalization. The sequence is that of Trophoblast glycoprotein (Tpbg) from Rattus norvegicus (Rat).